The sequence spans 94 residues: DNA-directed RNA polymerase subunit Rpo11 (94 aa).

This sequence belongs to the archaeal Rpo11/eukaryotic RPB11/RPC19 RNA polymerase subunit family. As to quaternary structure, part of the RNA polymerase complex.

Its subcellular location is the cytoplasm. It catalyses the reaction RNA(n) + a ribonucleoside 5'-triphosphate = RNA(n+1) + diphosphate. Its function is as follows. DNA-dependent RNA polymerase (RNAP) catalyzes the transcription of DNA into RNA using the four ribonucleoside triphosphates as substrates. The sequence is that of DNA-directed RNA polymerase subunit Rpo11 from Thermococcus kodakarensis (strain ATCC BAA-918 / JCM 12380 / KOD1) (Pyrococcus kodakaraensis (strain KOD1)).